The primary structure comprises 173 residues: MAIILGVDPGSRITGYGVIQCQGRQQIYLGSGCIRTSADDLPQRLQQIYAGLCEIITQYKPDEFAIERVFMAKNADSALKLGQARGAAIVAATCAGLPVAEYSATQIKSAVVGTGRAQKTQVQHMIKQLLKLPASPQADAADALGVAICHFHTYQSLIAMGGKASSRTYGRYK.

Catalysis depends on residues aspartate 8, glutamate 67, and aspartate 139. Residues aspartate 8, glutamate 67, and aspartate 139 each contribute to the Mg(2+) site.

The protein belongs to the RuvC family. Homodimer which binds Holliday junction (HJ) DNA. The HJ becomes 2-fold symmetrical on binding to RuvC with unstacked arms; it has a different conformation from HJ DNA in complex with RuvA. In the full resolvosome a probable DNA-RuvA(4)-RuvB(12)-RuvC(2) complex forms which resolves the HJ. Requires Mg(2+) as cofactor.

The protein resides in the cytoplasm. The enzyme catalyses Endonucleolytic cleavage at a junction such as a reciprocal single-stranded crossover between two homologous DNA duplexes (Holliday junction).. In terms of biological role, the RuvA-RuvB-RuvC complex processes Holliday junction (HJ) DNA during genetic recombination and DNA repair. Endonuclease that resolves HJ intermediates. Cleaves cruciform DNA by making single-stranded nicks across the HJ at symmetrical positions within the homologous arms, yielding a 5'-phosphate and a 3'-hydroxyl group; requires a central core of homology in the junction. The consensus cleavage sequence is 5'-(A/T)TT(C/G)-3'. Cleavage occurs on the 3'-side of the TT dinucleotide at the point of strand exchange. HJ branch migration catalyzed by RuvA-RuvB allows RuvC to scan DNA until it finds its consensus sequence, where it cleaves and resolves the cruciform DNA. This is Crossover junction endodeoxyribonuclease RuvC from Shewanella frigidimarina (strain NCIMB 400).